A 58-amino-acid chain; its full sequence is uncharacterized protein (58 aa).

Positions 23–51 are enriched in low complexity; it reads TTTSTSTTTTSTTTSTTTSTTTTTTTTTT. The disordered stretch occupies residues 23 to 58; it reads TTTSTSTTTTSTTTSTTTSTTTTTTTTTTKDFNTET.

This is an uncharacterized protein from Dictyostelium discoideum (Social amoeba).